Here is a 199-residue protein sequence, read N- to C-terminus: Imidazoleglycerol-phosphate dehydratase (199 aa).

Belongs to the imidazoleglycerol-phosphate dehydratase family.

The protein localises to the cytoplasm. The enzyme catalyses D-erythro-1-(imidazol-4-yl)glycerol 3-phosphate = 3-(imidazol-4-yl)-2-oxopropyl phosphate + H2O. It participates in amino-acid biosynthesis; L-histidine biosynthesis; L-histidine from 5-phospho-alpha-D-ribose 1-diphosphate: step 6/9. The chain is Imidazoleglycerol-phosphate dehydratase from Methylibium petroleiphilum (strain ATCC BAA-1232 / LMG 22953 / PM1).